Reading from the N-terminus, the 149-residue chain is Large ribosomal subunit protein uL13 (149 aa).

This sequence belongs to the universal ribosomal protein uL13 family. In terms of assembly, part of the 50S ribosomal subunit.

This protein is one of the early assembly proteins of the 50S ribosomal subunit, although it is not seen to bind rRNA by itself. It is important during the early stages of 50S assembly. This Chlamydia pneumoniae (Chlamydophila pneumoniae) protein is Large ribosomal subunit protein uL13.